The primary structure comprises 174 residues: Protein PopB (174 aa).

The interval 1-174 (MSHSKIKAGG…EAMKIKDDDD (174 aa)) is disordered. Residues 50–65 (LNKSNLGSDSQTWTPG) show a composition bias toward polar residues. Over residues 66 to 78 (STMVSLKSRSSSS) the composition is skewed to low complexity. A compositionally biased stretch (basic and acidic residues) spans 79 to 89 (HKPDTGGDTKP). A compositionally biased stretch (low complexity) spans 147–161 (IALQRAIQRQTQTRQ). Over residues 162 to 174 (KMQEAMKIKDDDD) the composition is skewed to basic and acidic residues.

The protein localises to the secreted. Probably involved in host-pathogen interactions. The chain is Protein PopB (popB) from Ralstonia nicotianae (strain ATCC BAA-1114 / GMI1000) (Ralstonia solanacearum).